Here is a 332-residue protein sequence, read N- to C-terminus: Fructose-1,6-bisphosphatase class 1 (332 aa).

Mg(2+) contacts are provided by glutamate 91, aspartate 112, leucine 114, and aspartate 115. Substrate is bound by residues 115–118, asparagine 208, tyrosine 241, and lysine 271; that span reads DGSS. Glutamate 277 is a binding site for Mg(2+).

Belongs to the FBPase class 1 family. In terms of assembly, homotetramer. Mg(2+) is required as a cofactor.

The protein localises to the cytoplasm. The enzyme catalyses beta-D-fructose 1,6-bisphosphate + H2O = beta-D-fructose 6-phosphate + phosphate. It participates in carbohydrate biosynthesis; Calvin cycle. In Chlorobium phaeobacteroides (strain DSM 266 / SMG 266 / 2430), this protein is Fructose-1,6-bisphosphatase class 1.